Here is a 313-residue protein sequence, read N- to C-terminus: Protein FixB (313 aa).

255–283 (LYLAVGISGQIQHMVGANASQTIFAINKD) is an FAD binding site.

The protein belongs to the ETF alpha-subunit/FixB family. As to quaternary structure, heterodimer of FixA and FixB.

It participates in amine and polyamine metabolism; carnitine metabolism. Functionally, required for anaerobic carnitine reduction. May bring reductant to CaiA. The chain is Protein FixB from Escherichia coli O1:K1 / APEC.